Here is a 509-residue protein sequence, read N- to C-terminus: Maturase K (509 aa).

The protein belongs to the intron maturase 2 family. MatK subfamily.

The protein resides in the plastid. It localises to the chloroplast. Usually encoded in the trnK tRNA gene intron. Probably assists in splicing its own and other chloroplast group II introns. The protein is Maturase K of Vatairea macrocarpa.